The chain runs to 465 residues: 5-cytosine rRNA methyltransferase nsun-4 (465 aa).

Residues Met-1–Gln-6 constitute a mitochondrion transit peptide. Basic and acidic residues predominate over residues Gln-106–Ile-130. Residues Gln-106–Asp-145 are disordered. S-adenosyl-L-methionine-binding positions include Cys-260–Lys-266, Asp-283, Asp-316, and Asp-335. The Nucleophile role is filled by Cys-390.

Belongs to the class I-like SAM-binding methyltransferase superfamily. RsmB/NOP family.

It localises to the mitochondrion. It carries out the reaction a cytidine in rRNA + S-adenosyl-L-methionine = a 5-methylcytidine in rRNA + S-adenosyl-L-homocysteine + H(+). The enzyme catalyses a cytidine in tRNA + S-adenosyl-L-methionine = a 5-methylcytidine in tRNA + S-adenosyl-L-homocysteine + H(+). Functionally, mitochondrial methyltransferase which methylates cytosine to 5-methylcytosine (m5C) in rRNAs and tRNAs at multiple sites. May play a role in the translation of leucine and proline codons. This chain is 5-cytosine rRNA methyltransferase nsun-4, found in Caenorhabditis elegans.